The primary structure comprises 91 residues: Small ribosomal subunit protein uS19 (91 aa).

This sequence belongs to the universal ribosomal protein uS19 family.

Protein S19 forms a complex with S13 that binds strongly to the 16S ribosomal RNA. This chain is Small ribosomal subunit protein uS19, found in Desulfotalea psychrophila (strain LSv54 / DSM 12343).